A 261-amino-acid chain; its full sequence is Uridine-cytidine kinase 2-B (261 aa).

ATP is bound at residue 29–37 (GGTASGKSS). Substrate is bound by residues Asp-86, Tyr-114, His-119, Arg-168, Arg-178, and Gln-186. Asp-215 provides a ligand contact to ATP. Residues 238–261 (RQNGFQNGHGTPRQRRTSESSRPH) form a disordered region.

It belongs to the uridine kinase family. In terms of assembly, homotetramer.

It catalyses the reaction uridine + ATP = UMP + ADP + H(+). The enzyme catalyses cytidine + ATP = CMP + ADP + H(+). It functions in the pathway pyrimidine metabolism; CTP biosynthesis via salvage pathway; CTP from cytidine: step 1/3. The protein operates within pyrimidine metabolism; UMP biosynthesis via salvage pathway; UMP from uridine: step 1/1. In terms of biological role, phosphorylates uridine and cytidine to uridine monophosphate and cytidine monophosphate. Does not phosphorylate deoxyribonucleosides or purine ribonucleosides. Can use ATP or GTP as a phosphate donor. The sequence is that of Uridine-cytidine kinase 2-B (uck2b) from Danio rerio (Zebrafish).